Reading from the N-terminus, the 1298-residue chain is Activating molecule in BECN1-regulated autophagy protein 1 (1298 aa).

The interval 1–22 is interaction with DDB1; sequence MKVVPEKNAVRILWGRERGARA. Lysine 45 participates in a covalent cross-link: Glycyl lysine isopeptide (Lys-Gly) (interchain with G-Cter in ubiquitin). WD repeat units follow at residues 51-90, 93-133, and 135-175; these read DSPR…CVHS, GHRR…ESWF, and DSNN…AVVK. At serine 52 the chain carries Phosphoserine; by MTOR. Polar residues predominate over residues 254-266; sequence IQVGEQSTVQDSA. Residues 254–284 are disordered; that stretch reads IQVGEQSTVQDSATPSPPPPPPQPSTERPRT. Over residues 268–277 the composition is skewed to pro residues; it reads PSPPPPPPQP. Positions 275–281 match the PxP motif 1 motif; the sequence is PQPSTER. Phosphoserine is present on serine 328. The interval 343–413 is disordered; the sequence is FVQTEPFHPP…SRYHREIAPG (71 aa). Polar residues predominate over residues 354-385; that stretch reads QASSTQQDQGLLNRPSAFSTVQSSTAGNTLRN. 2 positions are modified to phosphoserine: serine 394 and serine 443. 3 stretches are compositionally biased toward polar residues: residues 458 to 467, 547 to 561, and 590 to 601; these read SQASVYTSAT, HQPT…SNLS, and NYSSGEASSSWQ. 4 disordered regions span residues 458-494, 538-561, 590-690, and 747-796; these read SQAS…NSGS, IESE…SNLS, NYSS…DSLR, and RYQQ…NARM. Composition is skewed to low complexity over residues 602–614 and 628–639; these read VPSS…SSGS and SSSRLELSSSAS. A phosphoserine mark is found at serine 635 and serine 639. Residues 661 to 674 show a composition bias toward polar residues; the sequence is YTQSSRSGTVSQEA. An Asymmetric dimethylarginine modification is found at arginine 747. Over residues 772–781 the composition is skewed to acidic residues; the sequence is TDLEFEDFED. At serine 1043 the chain carries Phosphoserine; by IKKA. Positions 1043–1052 match the LIR motif; sequence SGVEYYWDQL. Residues 1060–1075 show a composition bias toward polar residues; sequence HSNSRSSERPGTSRAT. Residues 1060-1079 are disordered; it reads HSNSRSSERPGTSRATWRTD. Short sequence motifs (TQT motif) lie at residues 1104–1106 and 1116–1118; these read TQT. Disordered stretches follow at residues 1112–1143, 1190–1214, and 1227–1298; these read QNAE…YGAS, RSSQ…SRGL, and SPRT…PRNR. A compositionally biased stretch (polar residues) spans 1191–1212; sequence SSQTGTEPGAAHTSSPQPSTSR. Serine 1205 is subject to Phosphoserine. The PxP motif 2 signature appears at 1206 to 1212; that stretch reads PQPSTSR.

This sequence belongs to the WD repeat AMBRA1 family. As to quaternary structure, component of the DCX(AMBRA1) E3 ubiquitin ligase complex, also named CRL4(AMBRA1), at least composed of CUL4 (CUL4A or CUL4B), DDB1, AMBRA1 and RBX1. Interacts with BECN1. Probably forms a complex with BECN1 and PIK3C3. Interacts with BECN2. Interacts with BCL2; leading to prevent interaction with BCN1 and autophagy, interaction is disrupted upon autophagy induction. Interacts with ULK1. Interacts (via PxP motifs) with PPP2CA; enhancing interaction between PPP2CA and MYC or FOXO3. Forms a complex with PPP2CA and BECN1; AMBRA1 and BECN1 components of the complex regulate MYC stability via different pathways. Interacts (TQT motifs) with DYNLL1 and DYNLL2; tethering AMBRA1 and the BECN1-PIK3C3 complex in absence of autophagy. Interacts with TRAF6; interaction is required to mediate 'Lys-63'-linked ubiquitination of ULK1. Interacts with TRIM32; promoting activation of ULK1 by TRIM32 via unanchored 'Lys-63'-linked polyubiquitin chains. Interacts with PRKN. Interacts (via LIR motif) with LC3 (MAP1LC3A, MAP1LC3B or MAP1LC3C). Interacts with HUWE1. Interacts with PTK2/FAK. Interacts with SRC; required for SRC trafficking to autophagosomes. Phosphorylation at Ser-52 by MTOR inhibits its ability to regulate autophagy and mediate ubiquitination of ULK1. Phosphorylation by ULK1 in response to autophagy induction abolishes interaction with DYNLL1 and DYNLL2, releasing AMBRA1 from the cytoskeletal docking site to induce autophagosome nucleation. Phosphorylation by MTOR inhibits interaction with PPP2CA and subsequent dephosphorylation of MYC. Phosphorylation at Ser-1043 by CHUK/IKKA promotes its interaction with ATG8 family proteins GABARAP and MAP1LC3B and its mitophagic activity. In terms of processing, ubiquitinated by RNF2 via 'Lys-48'-linkage in unstressed cells, leading to its degradation by the proteasome. Induction of autophagy promotes stabilization via interaction with CUL4 (CUL4A or CUL4B) and DDB1. Upon prolonged starvation, ubiquitinated and degraded, terminating the autophagy response. Post-translationally, undergoes proteolytic processing by caspase-6 (CASP6), caspase-7 (CASP7) and caspase-8 (CASP8) during apoptosis, resulting in the dismantling of the autophagic machinery and the accomplishment of the programmed cell death program. Also cleaved by calpains during apoptosis, which mediate a complete proteolytic degradation.

The protein resides in the endoplasmic reticulum. It localises to the cytoplasm. It is found in the cytoskeleton. The protein localises to the cytoplasmic vesicle. Its subcellular location is the autophagosome. The protein resides in the mitochondrion. It localises to the cytosol. It is found in the nucleus. The protein localises to the cell junction. Its subcellular location is the focal adhesion. It participates in protein modification; protein ubiquitination. Its function is as follows. Substrate-recognition component of a DCX (DDB1-CUL4-X-box) E3 ubiquitin-protein ligase complex involved in cell cycle control and autophagy. The DCX(AMBRA1) complex specifically mediates the polyubiquitination of target proteins such as BECN1, CCND1, CCND2, CCND3, ELOC and ULK1. Acts as an upstream master regulator of the transition from G1 to S cell phase: AMBRA1 specifically recognizes and binds phosphorylated cyclin-D (CCND1, CCND2 and CCND3), leading to cyclin-D ubiquitination by the DCX(AMBRA1) complex and subsequent degradation. By controlling the transition from G1 to S phase and cyclin-D degradation, AMBRA1 acts as a tumor suppressor that promotes genomic integrity during DNA replication and counteracts developmental abnormalities and tumor growth. AMBRA1 also regulates the cell cycle by promoting MYC dephosphorylation and degradation independently of the DCX(AMBRA1) complex: acts via interaction with the catalytic subunit of protein phosphatase 2A (PPP2CA), which enhances interaction between PPP2CA and MYC, leading to MYC dephosphorylation and degradation. Acts as a regulator of Cul5-RING (CRL5) E3 ubiquitin-protein ligase complexes by mediating ubiquitination and degradation of Elongin-C (ELOC) component of CRL5 complexes. Acts as a key regulator of autophagy by modulating the BECN1-PIK3C3 complex: controls protein turnover during neuronal development, and regulates normal cell survival and proliferation. In normal conditions, AMBRA1 is tethered to the cytoskeleton via interaction with dyneins DYNLL1 and DYNLL2. Upon autophagy induction, AMBRA1 is released from the cytoskeletal docking site to induce autophagosome nucleation by mediating ubiquitination of proteins involved in autophagy. The DCX(AMBRA1) complex mediates 'Lys-63'-linked ubiquitination of BECN1, increasing the association between BECN1 and PIK3C3 to promote PIK3C3 activity. In collaboration with TRAF6, AMBRA1 mediates 'Lys-63'-linked ubiquitination of ULK1 following autophagy induction, promoting ULK1 stability and kinase activity. Also activates ULK1 via interaction with TRIM32: TRIM32 stimulates ULK1 through unanchored 'Lys-63'-linked polyubiquitin chains. Also acts as an activator of mitophagy via interaction with PRKN and LC3 proteins (MAP1LC3A, MAP1LC3B or MAP1LC3C); possibly by bringing damaged mitochondria onto autophagosomes. Also activates mitophagy by acting as a cofactor for HUWE1; acts by promoting HUWE1-mediated ubiquitination of MFN2. AMBRA1 is also involved in regulatory T-cells (Treg) differentiation by promoting FOXO3 dephosphorylation independently of the DCX(AMBRA1) complex: acts via interaction with PPP2CA, which enhances interaction between PPP2CA and FOXO3, leading to FOXO3 dephosphorylation and stabilization. May act as a regulator of intracellular trafficking, regulating the localization of active PTK2/FAK and SRC. Also involved in transcription regulation by acting as a scaffold for protein complexes at chromatin. This chain is Activating molecule in BECN1-regulated autophagy protein 1, found in Homo sapiens (Human).